Here is a 124-residue protein sequence, read N- to C-terminus: Large ribosomal subunit protein bL12c (124 aa).

This sequence belongs to the bacterial ribosomal protein bL12 family. Homodimer. Part of the ribosomal stalk of the 50S ribosomal subunit. Forms a multimeric L10(L12)X complex, where L10 forms an elongated spine to which 2 to 4 L12 dimers bind in a sequential fashion. Binds GTP-bound translation factors.

It is found in the plastid. It localises to the chloroplast. Its function is as follows. Forms part of the ribosomal stalk which helps the ribosome interact with GTP-bound translation factors. Is thus essential for accurate translation. This Cyanidioschyzon merolae (strain NIES-3377 / 10D) (Unicellular red alga) protein is Large ribosomal subunit protein bL12c.